Reading from the N-terminus, the 242-residue chain is UPF0173 metal-dependent hydrolase Rxyl_1261 (242 aa).

Belongs to the UPF0173 family.

This chain is UPF0173 metal-dependent hydrolase Rxyl_1261, found in Rubrobacter xylanophilus (strain DSM 9941 / JCM 11954 / NBRC 16129 / PRD-1).